A 200-amino-acid chain; its full sequence is Superoxide dismutase [Mn] 2 (200 aa).

Mn(2+)-binding residues include His-28, His-76, Asp-158, and His-162.

The protein belongs to the iron/manganese superoxide dismutase family. The cofactor is Mn(2+).

It catalyses the reaction 2 superoxide + 2 H(+) = H2O2 + O2. Functionally, destroys superoxide anion radicals which are normally produced within the cells and which are toxic to biological systems. The sequence is that of Superoxide dismutase [Mn] 2 (sod2) from Halobacterium salinarum (strain ATCC 700922 / JCM 11081 / NRC-1) (Halobacterium halobium).